The sequence spans 561 residues: 4-coumarate--CoA ligase 1 (561 aa).

Positions 210, 211, 212, 213, 214, and 218 each coordinate ATP. (E)-4-coumaroyl-AMP-binding residues include Tyr260 and Ser264. Lys281 contributes to the CoA binding site. An SBD1 region spans residues 283 to 352 (EINLLLELIQ…AKFPNAKLGQ (70 aa)). (E)-4-coumaroyl-AMP is bound by residues Ala330, Gln352, Gly353, Thr357, and Met365. Residues Gln352, Gly353, and Thr357 each contribute to the ATP site. Residues 353 to 420 (GYGMTEAGPV…IRGHQIMKGY (68 aa)) are SBD2. ATP is bound by residues Asp441 and Arg456. Residues Lys458 and Lys462 each coordinate (E)-4-coumaroyl-AMP. CoA-binding residues include Lys464 and Gly465. An ATP-binding site is contributed by Lys547.

This sequence belongs to the ATP-dependent AMP-binding enzyme family. It depends on Mg(2+) as a cofactor. In terms of tissue distribution, preferentially expressed in roots, bolting stems and siliques. Also detected in leaves.

It carries out the reaction (E)-4-coumarate + ATP + CoA = (E)-4-coumaroyl-CoA + AMP + diphosphate. The catalysed reaction is (E)-caffeate + ATP + CoA = (E)-caffeoyl-CoA + AMP + diphosphate. It catalyses the reaction (E)-ferulate + ATP + CoA = (E)-feruloyl-CoA + AMP + diphosphate. The enzyme catalyses (E)-4-coumarate + ATP + H(+) = (E)-4-coumaroyl-AMP + diphosphate. It carries out the reaction (E)-4-coumaroyl-AMP + CoA = (E)-4-coumaroyl-CoA + AMP + H(+). The catalysed reaction is (E)-caffeate + ATP + H(+) = (E)-caffeoyl-AMP + diphosphate. It catalyses the reaction (E)-caffeoyl-AMP + CoA = (E)-caffeoyl-CoA + AMP + H(+). The enzyme catalyses (E)-ferulate + ATP + H(+) = (E)-feruloyl-AMP + diphosphate. It carries out the reaction (E)-feruloyl-AMP + CoA = (E)-feruloyl-CoA + AMP + H(+). It participates in phytoalexin biosynthesis; 3,4',5-trihydroxystilbene biosynthesis; 3,4',5-trihydroxystilbene from trans-4-coumarate: step 1/2. Its function is as follows. Produces CoA thioesters of a variety of hydroxy- and methoxy-substituted cinnamic acids, which are used to synthesize several phenylpropanoid-derived compounds, including anthocyanins, flavonoids, isoflavonoids, coumarins, lignin, suberin and wall-bound phenolics. Follows a two-step reaction mechanism, wherein the carboxylate substrate first undergoes adenylation by ATP, followed by a thioesterification in the presence of CoA to yield the final CoA thioesters. The polypeptide is 4-coumarate--CoA ligase 1 (Arabidopsis thaliana (Mouse-ear cress)).